A 427-amino-acid polypeptide reads, in one-letter code: Adenylosuccinate synthetase (427 aa).

GTP-binding positions include 12–18 (GDEGKGK) and 40–42 (GHT). D13 serves as the catalytic Proton acceptor. The Mg(2+) site is built by D13 and G40. IMP-binding positions include 13–16 (DEGK), 38–41 (NAGH), T131, R145, Q226, T241, and R305. H41 acts as the Proton donor in catalysis. Position 301 to 307 (301 to 307 (ATTGRKR)) interacts with substrate. GTP contacts are provided by residues R307, 333-335 (KLD), and 415-417 (SVG).

This sequence belongs to the adenylosuccinate synthetase family. Homodimer. Requires Mg(2+) as cofactor.

The protein resides in the cytoplasm. It carries out the reaction IMP + L-aspartate + GTP = N(6)-(1,2-dicarboxyethyl)-AMP + GDP + phosphate + 2 H(+). Its pathway is purine metabolism; AMP biosynthesis via de novo pathway; AMP from IMP: step 1/2. Functionally, plays an important role in the de novo pathway of purine nucleotide biosynthesis. Catalyzes the first committed step in the biosynthesis of AMP from IMP. The polypeptide is Adenylosuccinate synthetase (Oleidesulfovibrio alaskensis (strain ATCC BAA-1058 / DSM 17464 / G20) (Desulfovibrio alaskensis)).